A 276-amino-acid polypeptide reads, in one-letter code: Formamidopyrimidine-DNA glycosylase (276 aa).

Proline 2 serves as the catalytic Schiff-base intermediate with DNA. Catalysis depends on glutamate 3, which acts as the Proton donor. The active-site Proton donor; for beta-elimination activity is lysine 58. The DNA site is built by histidine 92, arginine 111, and lysine 154. The segment at 239-273 (QVYGHAGEECSSCGTILEKIKVNGRGTTFCPHCQV) adopts an FPG-type zinc-finger fold. Catalysis depends on arginine 263, which acts as the Proton donor; for delta-elimination activity.

It belongs to the FPG family. Monomer. It depends on Zn(2+) as a cofactor.

The catalysed reaction is Hydrolysis of DNA containing ring-opened 7-methylguanine residues, releasing 2,6-diamino-4-hydroxy-5-(N-methyl)formamidopyrimidine.. The enzyme catalyses 2'-deoxyribonucleotide-(2'-deoxyribose 5'-phosphate)-2'-deoxyribonucleotide-DNA = a 3'-end 2'-deoxyribonucleotide-(2,3-dehydro-2,3-deoxyribose 5'-phosphate)-DNA + a 5'-end 5'-phospho-2'-deoxyribonucleoside-DNA + H(+). Functionally, involved in base excision repair of DNA damaged by oxidation or by mutagenic agents. Acts as a DNA glycosylase that recognizes and removes damaged bases. Has a preference for oxidized purines, such as 7,8-dihydro-8-oxoguanine (8-oxoG). Has AP (apurinic/apyrimidinic) lyase activity and introduces nicks in the DNA strand. Cleaves the DNA backbone by beta-delta elimination to generate a single-strand break at the site of the removed base with both 3'- and 5'-phosphates. The polypeptide is Formamidopyrimidine-DNA glycosylase (Lactobacillus gasseri (strain ATCC 33323 / DSM 20243 / BCRC 14619 / CIP 102991 / JCM 1131 / KCTC 3163 / NCIMB 11718 / NCTC 13722 / AM63)).